A 181-amino-acid polypeptide reads, in one-letter code: Lysozyme C (181 aa).

Positions 1–19 are cleaved as a signal peptide; the sequence is MRIAFFLLILSIIVGLAYG. Residues 139-181 constitute a propeptide that is removed on maturation; the sequence is LTDSRPLGPFNVTEEEMDQLFIDHEIAMAQCEAEKTCNGFDLE.

It belongs to the dictyostelium lysozyme family. Post-translationally, contains six disulfide bonds.

It is found in the cytoplasmic vesicle lumen. The catalysed reaction is Hydrolysis of (1-&gt;4)-beta-linkages between N-acetylmuramic acid and N-acetyl-D-glucosamine residues in a peptidoglycan and between N-acetyl-D-glucosamine residues in chitodextrins.. Has antibacterial activity. The chain is Lysozyme C (alyC) from Dictyostelium discoideum (Social amoeba).